Consider the following 126-residue polypeptide: Hydrogenase maturation factor HypA (126 aa).

His2 provides a ligand contact to Ni(2+). 4 residues coordinate Zn(2+): Cys78, Cys81, Cys97, and Cys100.

The protein belongs to the HypA/HybF family.

In terms of biological role, involved in the maturation of [NiFe] hydrogenases. Required for nickel insertion into the metal center of the hydrogenase. The chain is Hydrogenase maturation factor HypA from Methanococcus maripaludis (strain C7 / ATCC BAA-1331).